The chain runs to 244 residues: NAD(P)H-quinone oxidoreductase subunit K (244 aa).

Residues C60, C61, C125, and C156 each contribute to the [4Fe-4S] cluster site. Positions 213–244 are disordered; it reads KSEKSIESSKLNPVEESSENIYETNSIDEVIK. The segment covering 231-244 has biased composition (polar residues); it reads ENIYETNSIDEVIK.

It belongs to the complex I 20 kDa subunit family. In terms of assembly, NDH-1 can be composed of about 15 different subunits; different subcomplexes with different compositions have been identified which probably have different functions. Requires [4Fe-4S] cluster as cofactor.

Its subcellular location is the cellular thylakoid membrane. It carries out the reaction a plastoquinone + NADH + (n+1) H(+)(in) = a plastoquinol + NAD(+) + n H(+)(out). It catalyses the reaction a plastoquinone + NADPH + (n+1) H(+)(in) = a plastoquinol + NADP(+) + n H(+)(out). Its function is as follows. NDH-1 shuttles electrons from an unknown electron donor, via FMN and iron-sulfur (Fe-S) centers, to quinones in the respiratory and/or the photosynthetic chain. The immediate electron acceptor for the enzyme in this species is believed to be plastoquinone. Couples the redox reaction to proton translocation, and thus conserves the redox energy in a proton gradient. Cyanobacterial NDH-1 also plays a role in inorganic carbon-concentration. This is NAD(P)H-quinone oxidoreductase subunit K from Prochlorococcus marinus subsp. pastoris (strain CCMP1986 / NIES-2087 / MED4).